A 420-amino-acid polypeptide reads, in one-letter code: Shaggy-related protein kinase delta (420 aa).

The segment at 1–61 (MESHLGNGVG…DIIDGVGAEP (61 aa)) is disordered. Residues 10-26 (GSSRSAKNTKNTSSSVD) are compositionally biased toward polar residues. The segment covering 28–41 (LSRDMLEMKIRDKT) has biased composition (basic and acidic residues). Residues 42–53 (EADEERDSEPDI) show a composition bias toward acidic residues. Positions 82 to 366 (YIAEHVVGTG…AVEACIHPFF (285 aa)) constitute a Protein kinase domain. ATP is bound by residues 88–96 (VGTGSFGMV) and Lys111. The active-site Proton acceptor is the Asp207. At Tyr242 the chain carries Phosphotyrosine.

The protein belongs to the protein kinase superfamily. CMGC Ser/Thr protein kinase family. GSK-3 subfamily. Post-translationally, autophosphorylated mainly on threonine and serine residues.

It carries out the reaction L-seryl-[protein] + ATP = O-phospho-L-seryl-[protein] + ADP + H(+). The catalysed reaction is L-threonyl-[protein] + ATP = O-phospho-L-threonyl-[protein] + ADP + H(+). Its function is as follows. May mediate extracellular signals to regulate transcription in differentiating cells. The chain is Shaggy-related protein kinase delta (ASK4) from Arabidopsis thaliana (Mouse-ear cress).